A 386-amino-acid polypeptide reads, in one-letter code: Glucose-1-phosphate adenylyltransferase (386 aa).

Alpha-D-glucose 1-phosphate contacts are provided by residues Y100, G165, 180 to 181 (EK), and S191.

Belongs to the bacterial/plant glucose-1-phosphate adenylyltransferase family. In terms of assembly, homotetramer.

It catalyses the reaction alpha-D-glucose 1-phosphate + ATP + H(+) = ADP-alpha-D-glucose + diphosphate. It functions in the pathway glycan biosynthesis; glycogen biosynthesis. Functionally, involved in the biosynthesis of ADP-glucose, a building block required for the elongation reactions to produce glycogen. Catalyzes the reaction between ATP and alpha-D-glucose 1-phosphate (G1P) to produce pyrophosphate and ADP-Glc. The polypeptide is Glucose-1-phosphate adenylyltransferase (Clostridium botulinum (strain Alaska E43 / Type E3)).